A 93-amino-acid chain; its full sequence is Alpha-conotoxin-like Ms20.1 (93 aa).

Positions 1-23 are cleaved as a signal peptide; that stretch reads MLKLEMMLVVLLILPLFYFDAGG. A propeptide spanning residues 24–45 is cleaved from the precursor; the sequence is QVVQRDWRSDGLARYLQRGDRD. Residue E48 is modified to 4-carboxyglutamate. Residue P54 is modified to 4-hydroxyproline. 4 cysteine pairs are disulfide-bonded: C62–C71, C67–C79, C72–C89, and C77–C91.

The protein belongs to the conotoxin D superfamily. In terms of assembly, hetero-, homo- or pseudo-homodimer (identical sequence, different post-translational modifications). Heterodimer of [carboxyGlu-48, hydroxyPro-54]Ms20.1 and [carboxy'Glu-50', hydroxy'Pro-56']Ms20.4 may exist. In terms of tissue distribution, expressed by the venom duct.

Its subcellular location is the secreted. In terms of biological role, alpha-conotoxins act on postsynaptic membranes, they bind to the nicotinic acetylcholine receptors (nAChR) and thus inhibit them. Through its two C-terminal domains, this homodimeric protein would bind to two nAChR allosteric sites, located outside the nAChR C-loop of the principal binding face and at the adjacent binding interface in a clockwise direction. This toxin specifically blocks mammalian neuronal nAChR of the alpha-7/CHRNA7, alpha-3-beta-2/CHRNA3-CHRNB2 and alpha-4-beta-2/CHRNA4-CHRNB2 subtypes. In Conus mustelinus (Weasel cone), this protein is Alpha-conotoxin-like Ms20.1.